The primary structure comprises 332 residues: DNA-directed RNA polymerase subunit alpha (332 aa).

The alpha N-terminal domain (alpha-NTD) stretch occupies residues 1–234; it reads MTVTANQVLR…DQLSVFGDFT (234 aa). An alpha C-terminal domain (alpha-CTD) region spans residues 248–332; that stretch reads VDPVLLRPID…AGVASHGMLG (85 aa).

The protein belongs to the RNA polymerase alpha chain family. Homodimer. The RNAP catalytic core consists of 2 alpha, 1 beta, 1 beta' and 1 omega subunit. When a sigma factor is associated with the core the holoenzyme is formed, which can initiate transcription.

The enzyme catalyses RNA(n) + a ribonucleoside 5'-triphosphate = RNA(n+1) + diphosphate. DNA-dependent RNA polymerase catalyzes the transcription of DNA into RNA using the four ribonucleoside triphosphates as substrates. The chain is DNA-directed RNA polymerase subunit alpha from Stenotrophomonas maltophilia (strain K279a).